The sequence spans 575 residues: Alpha-(1,6)-fucosyltransferase (575 aa).

Topologically, residues 1–9 (MRPWTGSWR) are cytoplasmic. The chain crosses the membrane as a helical; Signal-anchor for type II membrane protein span at residues 10–30 (WIMLILFAWGTLLFYIGGHLV). Residues 31 to 575 (RDNDHPDHSS…KYPTYPEAEK (545 aa)) lie on the Lumenal side of the membrane. 3 disulfides stabilise this stretch: Cys204–Cys266, Cys212–Cys230, and Cys218–Cys222. Positions 206-493 (KAKKLVCNIN…PDASANFHSL (288 aa)) constitute a GT23 domain. At Ser278 the chain carries Phosphoserine. The SH3-binding motif lies at 299–305 (PRPPYLP). Positions 365 to 366 (RR) are important for donor substrate binding. Cys465 and Cys472 form a disulfide bridge. In terms of domain architecture, SH3 spans 502–563 (QNAHNQIAIY…PSYKVREKIE (62 aa)).

This sequence belongs to the glycosyltransferase 23 family. Post-translationally, tyrosine phosphorylated by PKDCC/VLK.

The protein localises to the golgi apparatus. Its subcellular location is the golgi stack membrane. It catalyses the reaction N(4)-{beta-D-GlcNAc-(1-&gt;2)-alpha-D-Man-(1-&gt;3)-[beta-D-GlcNAc-(1-&gt;2)-alpha-D-Man-(1-&gt;6)]-beta-D-Man-(1-&gt;4)-beta-D-GlcNAc-(1-&gt;4)-beta-D-GlcNAc}-L-asparaginyl-[protein] + GDP-beta-L-fucose = an N(4)-{beta-D-GlcNAc-(1-&gt;2)-alpha-D-Man-(1-&gt;3)-[beta-D-GlcNAc-(1-&gt;2)-alpha-D-Man-(1-&gt;6)]-beta-D-Man-(1-&gt;4)-beta-D-GlcNAc-(1-&gt;4)-[alpha-L-Fuc-(1-&gt;6)]-beta-D-GlcNAc}-L-asparaginyl-[protein] + GDP + H(+). It functions in the pathway protein modification; protein glycosylation. Its function is as follows. Catalyzes the addition of fucose in alpha 1-6 linkage to the first GlcNAc residue, next to the peptide chains in N-glycans. The protein is Alpha-(1,6)-fucosyltransferase (FUT8) of Homo sapiens (Human).